Reading from the N-terminus, the 61-residue chain is Short neurotoxin 2 (61 aa).

Cystine bridges form between C3–C23, C17–C40, C42–C53, and C54–C59.

It belongs to the three-finger toxin family. Short-chain subfamily. Type I alpha-neurotoxin sub-subfamily. In terms of tissue distribution, expressed by the venom gland.

It is found in the secreted. Functionally, binds to muscle nicotinic acetylcholine receptor (nAChR) and inhibit acetylcholine from binding to the receptor, thereby impairing neuromuscular transmission. In Hemachatus haemachatus (Rinkhals), this protein is Short neurotoxin 2.